We begin with the raw amino-acid sequence, 394 residues long: Carbamoyltransferase HypF homolog (394 aa).

The protein belongs to the carbamoyltransferase HypF family.

In Cupriavidus necator (strain ATCC 17699 / DSM 428 / KCTC 22496 / NCIMB 10442 / H16 / Stanier 337) (Ralstonia eutropha), this protein is Carbamoyltransferase HypF homolog (hypF1).